A 412-amino-acid polypeptide reads, in one-letter code: Eukaryotic initiation factor 4A-1 (412 aa).

Ala-2 carries the N-acetylalanine modification. Positions 39 to 67 match the Q motif motif; that stretch reads ESFDAMGLQENLLRGIYAYGFEKPSAIQQ. The region spanning 70 to 240 is the Helicase ATP-binding domain; the sequence is IVPFCKGLDV…RKFMSKPVRI (171 aa). 83 to 90 is a binding site for ATP; it reads AQSGTGKT. A Phosphoserine modification is found at Ser-104. Phosphothreonine is present on Thr-145. Positions 188–191 match the DEAD box motif; sequence DEAD. Positions 251 to 412 constitute a Helicase C-terminal domain; it reads GIKQFYVNVE…ELPSNVADLL (162 aa).

It belongs to the DEAD box helicase family. eIF4A subfamily. As to quaternary structure, eIF4F is a multi-subunit complex, the composition of which varies with external and internal environmental conditions. It is composed of at least EIF4A, EIF4E and EIF4G. Interacts with CDKA-1. Interacts with MRF1, MRF2, MRF3/ECIP1 and MRF4. In terms of tissue distribution, highly expressed in the whole plant.

The protein resides in the cytoplasm. The enzyme catalyses ATP + H2O = ADP + phosphate + H(+). ATP-dependent RNA helicase which is a subunit of the eIF4F complex involved in cap recognition and is required for mRNA binding to ribosome. In the current model of translation initiation, eIF4A unwinds RNA secondary structures in the 5'-UTR of mRNAs which is necessary to allow efficient binding of the small ribosomal subunit, and subsequent scanning for the initiator codon. The polypeptide is Eukaryotic initiation factor 4A-1 (Arabidopsis thaliana (Mouse-ear cress)).